The chain runs to 260 residues: HTH-type transcriptional repressor NanR (260 aa).

Positions 1 to 21 are disordered; that stretch reads MSAFDHSSDDTQETIGNSLRR. An HTH gntR-type domain is found at 27–95; the sequence is KKLSEMVEEE…NGERARVSRP (69 aa). Positions 55–74 form a DNA-binding region, H-T-H motif; it reads ERELMAFFNVGRPSVREALA.

Belongs to the NanR family.

Its function is as follows. Transcriptional repressor that controls expression of the genes required for the catabolism of sialic acids. The chain is HTH-type transcriptional repressor NanR from Klebsiella aerogenes (strain ATCC 13048 / DSM 30053 / CCUG 1429 / JCM 1235 / KCTC 2190 / NBRC 13534 / NCIMB 10102 / NCTC 10006 / CDC 819-56) (Enterobacter aerogenes).